The primary structure comprises 460 residues: Ammonium transporter Rh type B-A (460 aa).

The Cytoplasmic segment spans residues 1 to 10 (MTGYSTNMRI). A helical membrane pass occupies residues 11-31 (KLPLFCLILQFITIILFAVFV). The Extracellular segment spans residues 32–62 (RYDHESDARGWHDELKNHSTANADNDFYFRY). Asn-48 is a glycosylation site (N-linked (GlcNAc...) asparagine). A helical membrane pass occupies residues 63-83 (PSFQDVHVMIFIGFGFLMTFL). At 84-87 (KRYG) the chain is on the cytoplasmic side. A helical membrane pass occupies residues 88-108 (FSSVAFNFLIAAFGLQWSTLI). Over 109-125 (QGFFHGFHDGKIHVGIE) the chain is Extracellular. A helical membrane pass occupies residues 126-146 (SMINADFCTGAVLISFGAVLG). Residues 147–150 (KTSP) are Cytoplasmic-facing. The chain crosses the membrane as a helical span at residues 151 to 171 (VQLIVMTLIEVTLFGINEYII). Residues 172–179 (LNIVGAKD) are Extracellular-facing. The chain crosses the membrane as a helical span at residues 180 to 202 (AGGSMTIHTFGAYFGLIVSRVLY). Residues 203–220 (RADLDKSRQREGSVYHSD) are Cytoplasmic-facing. A helical membrane pass occupies residues 221–241 (LFAMIGTIYLWMFWPSFNSAV). The Extracellular portion of the chain corresponds to 242–252 (TAHGDDQHRTV). Residues 253–273 (LNTYYSLAACTLATFGFSALL) traverse the membrane as a helical segment. Topologically, residues 274-283 (NGEGKLDMVH) are cytoplasmic. A helical membrane pass occupies residues 284 to 304 (IQNAALAGGVAVGTSGEMMLT). Position 305 (Pro-305) is a topological domain, extracellular. Residues 306–326 (FGAMIAGTLAGIVSVLGYKYL) traverse the membrane as a helical segment. Residues 327 to 347 (TPVLDSKLKIQDTCGVHNLHG) are Cytoplasmic-facing. The chain crosses the membrane as a helical span at residues 348–368 (MPGILGAVIGAIVALFATADI). Residues 369 to 394 (YGDGMDDVFPMIFDGSRTAKQQSLYQ) lie on the Extracellular side of the membrane. Residues 395–415 (FLALLVALGFAIVGGTVVGFI) traverse the membrane as a helical segment. The Cytoplasmic portion of the chain corresponds to 416–460 (LKLPLFGTPSDAECFEDAVYWEVPGGEGHQQLTVVVNNEDPDTQA).

Belongs to the ammonium transporter (TC 2.A.49) family. Rh subfamily.

It is found in the basolateral cell membrane. It localises to the cytoplasmic vesicle membrane. Its function is as follows. Functions as a specific ammonium transporter. This Xenopus laevis (African clawed frog) protein is Ammonium transporter Rh type B-A (rhbg-a).